A 137-amino-acid polypeptide reads, in one-letter code: Proofreading thioesterase EntH (137 aa).

Glutamate 63 acts as the Nucleophile or proton acceptor in catalysis.

It belongs to the thioesterase PaaI family. In terms of assembly, homotetramer. Dimer of dimers. Interacts specifically with the aryl carrier protein (ArCP) domain of EntB.

The protein localises to the cytoplasm. It participates in siderophore biosynthesis; enterobactin biosynthesis. Functionally, required for optimal enterobactin synthesis. Acts as a proofreading enzyme that prevents EntB misacylation by hydrolyzing the thioester bound existing between EntB and wrongly charged molecules. The chain is Proofreading thioesterase EntH from Escherichia coli O6:H1 (strain CFT073 / ATCC 700928 / UPEC).